We begin with the raw amino-acid sequence, 181 residues long: Large ribosomal subunit protein uL5 (181 aa).

It belongs to the universal ribosomal protein uL5 family. In terms of assembly, part of the 50S ribosomal subunit; part of the 5S rRNA/L5/L18/L25 subcomplex. Contacts the 5S rRNA and the P site tRNA. Forms a bridge to the 30S subunit in the 70S ribosome.

Functionally, this is one of the proteins that bind and probably mediate the attachment of the 5S RNA into the large ribosomal subunit, where it forms part of the central protuberance. In the 70S ribosome it contacts protein S13 of the 30S subunit (bridge B1b), connecting the 2 subunits; this bridge is implicated in subunit movement. Contacts the P site tRNA; the 5S rRNA and some of its associated proteins might help stabilize positioning of ribosome-bound tRNAs. This chain is Large ribosomal subunit protein uL5, found in Helicobacter acinonychis (strain Sheeba).